The chain runs to 490 residues: MARFGTQKLYIDGAYVDAGSDATFEAINPATGEVLAHVQRATEADVEKAVESAERGQKVWAAMTAMQRSRILRRAVDILRERNDELAQLETLDTGKSYSETRYVDIVTGADVLEYYAGLVPAIEGEQIPLRESSFVYTRREPLGVTVGIGAWNYPIQIALWKSAPALAAGNAMIFKPSEVTSLTTLKLAEIYTEAGLPNGVFNVLTGSGREVGTWLTEHPRIEKVSFTGGTTTGKKVMASASSSSLKEVTMELGGKSPLIICADADLDKAADIAMMANFYSSGQVCTNGTRVFIPAEMKAAFEAKIAERVARIRVGNPEDENTNFGPLVSFAHMENVLSYIAKGKEEGARVLCGGERLTEGEFAKGAFVAPTVFTDCSDDMTIVKEEIFGPVMSILSYETEEEVIRRANDTEYGLAAGVCTNDITRAHRIIHKLEAGICWINAWGESPAEMPVGGYKQSGVGRENGVSSLAQYTRIKSVQVELGGYNSVF.

K(+) is bound by residues Ile27 and Asp93. 150-152 (GAW) provides a ligand contact to NAD(+). The active-site Charge relay system is Lys162. 176–179 (KPSE) serves as a coordination point for NAD(+). Residue Val180 participates in K(+) binding. 230–233 (GTTT) is an NAD(+) binding site. K(+) is bound at residue Leu246. Residue Glu252 is the Proton acceptor of the active site. Residues Gly254, Cys286, and Glu387 each coordinate NAD(+). Catalysis depends on Cys286, which acts as the Nucleophile. Cys286 is modified (cysteine sulfenic acid (-SOH)). K(+)-binding residues include Lys457 and Gly460. Glu464 acts as the Charge relay system in catalysis.

The protein belongs to the aldehyde dehydrogenase family. Dimer of dimers. K(+) is required as a cofactor.

It carries out the reaction betaine aldehyde + NAD(+) + H2O = glycine betaine + NADH + 2 H(+). The protein operates within amine and polyamine biosynthesis; betaine biosynthesis via choline pathway; betaine from betaine aldehyde: step 1/1. In terms of biological role, involved in the biosynthesis of the osmoprotectant glycine betaine. Catalyzes the irreversible oxidation of betaine aldehyde to the corresponding acid. This is Betaine aldehyde dehydrogenase from Pseudomonas putida (strain GB-1).